Reading from the N-terminus, the 136-residue chain is Organic hydroperoxide resistance protein OhrB (136 aa).

It belongs to the OsmC/Ohr family.

Involved in organic hydroperoxide resistance. In Bacillus subtilis (strain 168), this protein is Organic hydroperoxide resistance protein OhrB (ohrB).